A 1325-amino-acid chain; its full sequence is Sperm-specific sodium:proton exchanger (1325 aa).

Positions 1-29 are cleaved as a signal peptide; the sequence is MKKRVVKLRELVPAVAALAVAVLIQSATG. The tract at residues 28-68 is disordered; the sequence is TGSSGGSGHTPTTQATHADDHDLTTHNGTEEHDDGHDDGHD. Residues 30 to 76 are Extracellular-facing; sequence SSGGSGHTPTTQATHADDHDLTTHNGTEEHDDGHDDGHDDLHAHAPK. Residues 44–68 show a composition bias toward basic and acidic residues; that stretch reads HADDHDLTTHNGTEEHDDGHDDGHD. His73 serves as a coordination point for a 1,2-diacylglycero-3-phosphate. A helical transmembrane segment spans residues 77 to 96; that stretch reads VIVFISGSCLFGAISRSLFK. At 97 to 101 the chain is on the cytoplasmic side; sequence KLPIP. A helical transmembrane segment spans residues 102–119; the sequence is YTVVLLILGAILGVVASN. The Extracellular portion of the chain corresponds to 120–135; it reads VPLVEEHTRDVAHMDP. Residues 136-152 traverse the membrane as a helical segment; it reads HVLLQIFLPVLIFESAF. The Cytoplasmic portion of the chain corresponds to 153-162; that stretch reads AMDVHTFMRS. Residues 163–188 traverse the membrane as a helical segment; that stretch reads FSQVCILALFGLVVASVLTAVLAMNL. A transport core domain region spans residues 163–250; it reads FSQVCILALF…AIVIFNVFMK (88 aa). The Extracellular portion of the chain corresponds to 189 to 194; sequence FNYNWN. Residues 195–220 traverse the membrane as a helical segment; sequence FSEAMMFGAIMSATDPVAVVALLKDL. The Cytoplasmic segment spans residues 221-223; sequence GAS. Residues 224–249 traverse the membrane as a helical segment; the sequence is KQLGTIIEGESLLNDGCAIVIFNVFM. The Essential for sodium:proton exchange motif lies at 237 to 238; sequence ND. Residues 250-260 are Extracellular-facing; the sequence is KMVFFPQLTST. Residues 261-292 form a helical membrane-spanning segment; it reads VGQNVLYFLQVAVAGPLWGYAVAKVTVFFLSH. At 293 to 296 the chain is on the cytoplasmic side; the sequence is IFND. Residues 297-319 form a helical membrane-spanning segment; the sequence is ALVEITITLAATYLTYYIGDIWL. Residues 320 to 322 are Extracellular-facing; the sequence is EVS. The helical transmembrane segment at 323 to 336 threads the bilayer; the sequence is GVLAVVVLGLIVNA. Residues 337–343 lie on the Cytoplasmic side of the membrane; sequence EKTSISP. The chain crosses the membrane as a helical span at residues 344–377; it reads EVEVFLHRFWEMLAYLANTLIFMMVGVVVTQKAL. Over 378 to 382 the chain is Extracellular; sequence VAVDK. A helical membrane pass occupies residues 383 to 412; sequence MDWFYLIILYLAITIIRGMVISLFSPILSR. The interval 383-481 is transport core domain; the sequence is MDWFYLIILY…TTIQTLLRIL (99 aa). Residues 413–418 are Cytoplasmic-facing; sequence IGYGLT. The chain crosses the membrane as a helical span at residues 419–446; it reads WRNAVIMTWGGLRGAVGLALALVVENLA. The Extracellular portion of the chain corresponds to 447–450; the sequence is GNDV. A helical transmembrane segment spans residues 451–481; sequence IGSKFLFHTAGIVVLTLVINATTIQTLLRIL. Over 482 to 677 the chain is Cytoplasmic; sequence GMSDISIPKR…GKLMYKICHH (196 aa). An interacts with the S4 segment of voltage sensor domain region spans residues 575 to 620; that stretch reads FADMMEEARLRMLKAEKISYWKQFEHGMLAREALRLLVQHAEVAAD. Positions 605–620 are interacts with the transport core domain; can lock the transporter in the inward conformation; the sequence is REALRLLVQHAEVAAD. Residues 678–708 form a helical membrane-spanning segment; sequence MAFEVTINIAIVLNIVPIIMEFVVQDKMASV. Residues 709-724 lie on the Extracellular side of the membrane; it reads STMAAPGSTVSSEPSS. Residues 725–752 traverse the membrane as a helical segment; it reads LQKIEDALRISNYVFFVIYAIEAIVKIL. At 753–760 the chain is on the cytoplasmic side; that stretch reads GLGRHYIV. A helical membrane pass occupies residues 761–784; it reads SHWNKFDAFILVVALVDIIIAETL. Topologically, residues 785–795 are extracellular; sequence LKGSITINLSS. A helical membrane pass occupies residues 796–822; it reads IKVVKLFRLLRGLRMLRLTKALIPKLI. The tract at residues 796–857 is S4 segment of voltage sensor domain; sequence IKVVKLFRLL…EEVGKIIDRM (62 aa). At 823 to 1325 the chain is on the cytoplasmic side; the sequence is LVVNGKINNQ…EEGAAPRVNV (503 aa). An interacts with the S4 segment of voltage sensor domain region spans residues 860–919; it reads NKKILRELKHISETGRLQVVKELGLLQREHPGIAVSVKTRQAIRTILNHSRETIHELQGA. The cNMP-binding domain stretch occupies residues 968–1068; sequence KLIDFIKARA…CETTVQVYFI (101 aa). Gly1043 serves as a coordination point for 3',5'-cyclic AMP. 3',5'-cyclic GMP contacts are provided by Gly1043, Glu1044, and Met1045. 3',5'-cyclic AMP-binding residues include Met1045, Gly1046, Arg1053, and Asn1054. 2 residues coordinate 3',5'-cyclic GMP: Arg1053 and Asn1054. The disordered stretch occupies residues 1237-1325; the sequence is MLSRKSSGAA…EEGAAPRVNV (89 aa). The span at 1266–1280 shows a compositional bias: low complexity; that stretch reads VSPSVPTKTTPKPKS.

This sequence belongs to the monovalent cation:proton antiporter 1 (CPA1) transporter (TC 2.A.36) family. Homodimer; the dimerization is stabilized in the presence of phosphatidic acids.

It localises to the cell projection. It is found in the cilium. The protein localises to the flagellum membrane. It carries out the reaction Na(+)(in) + H(+)(out) = Na(+)(out) + H(+)(in). With respect to regulation, gated by voltage and stimulated by cyclic nucleotides which shift the activation voltage closer to resting membrane potential. Not inhibited by common sodium:proton exchanger inhibitors such as amiloride. Functionally, electroneutral sodium:proton antiporter that regulates intracellular pH of sperm along with capacitation and fertility. Activated in response to egg-derived chemoattractants, couples membrane voltage to sodium:proton exchange and transduces membrane hyperpolarization to cytoplasmic alkalization to cAMP signaling and ultimately to sperm motility. The chain is Sperm-specific sodium:proton exchanger from Strongylocentrotus purpuratus (Purple sea urchin).